Here is a 93-residue protein sequence, read N- to C-terminus: MAKRTKKVGIVGKYGTRYGASIRKQIKKMEVSQHSKYFCEFCGKYGVKRKAVGIWGCKDCGKVKAGGAYTMNTASAVTVRSHTIRRLREQIEG.

A C4-type zinc finger spans residues 39-60 (CEFCGKYGVKRKAVGIWGCKDC).

This sequence belongs to the eukaryotic ribosomal protein eL43 family.

This is Large ribosomal subunit protein eL43 (RPL37A) from Brassica rapa subsp. rapa (Turnip).